We begin with the raw amino-acid sequence, 524 residues long: MNNNDKWARYCDLLYSDDSLGFWLDISRMDVAINDFEDFNEIYSKAFDALESLENGSIANIDEGRQVGHYWLRNPKVAPSPEISDSITKEIQDISKFGSSILNGEITNSDGEKYTDVFWIGIGGSGLGPLLIKESFKRESIGLDLHFLDNVDPEGISHKLNSILPNLNSTLFVVVSKSGGTPEPLIGMEQAMKFVRDNNQNWSSRAIAITSKGSKLDLLAHNENWLDIFDLPDWVGGRTSITGAVGLLPAALIGADINKFLNGASQMDALTRVKDIKNNPAALLSLAWFKSGNGKGLRDMVVLPYRDRLEVFSRYLQQLVMESLGKKFDRDENQVNQGIAVYGNKGSTDQHAYVQQLRDGIDNFFVNFIEILHDPLEIVEVKNKRPGDYLSGFLQGTRSALTEGGRQNLTITFKSFDESSLGALIALFERAVSLYAELINVNAYNQPGVEAGKKAATKIIKLQKEIEELLDDGKQRTLNEINDALSSDSTESIYLILRKLSENSDHYSMIGNQSNPDKLIISKT.

Glu322 (proton donor) is an active-site residue. Active-site residues include His351 and Lys453.

Belongs to the GPI family.

The protein localises to the cytoplasm. It carries out the reaction alpha-D-glucose 6-phosphate = beta-D-fructose 6-phosphate. The protein operates within carbohydrate biosynthesis; gluconeogenesis. Its pathway is carbohydrate degradation; glycolysis; D-glyceraldehyde 3-phosphate and glycerone phosphate from D-glucose: step 2/4. Functionally, catalyzes the reversible isomerization of glucose-6-phosphate to fructose-6-phosphate. This is Glucose-6-phosphate isomerase from Prochlorococcus marinus (strain NATL2A).